The sequence spans 412 residues: Putative competence-damage inducible protein (412 aa).

The protein belongs to the CinA family.

The chain is Putative competence-damage inducible protein from Bacillus cereus (strain AH187).